We begin with the raw amino-acid sequence, 1692 residues long: Tyrosine-protein phosphatase non-receptor type 23 (1692 aa).

One can recognise a BRO1 domain in the interval 8 to 394 (PMIWLDLKEA…AKIEDKNEVL (387 aa)). 2 TPR repeats span residues 250 to 283 (AVAH…LNEA) and 374 to 407 (EEKA…DPET). A coiled-coil region spans residues 552-639 (KAVLQNLKRI…RALTEANVQY (88 aa)). Disordered stretches follow at residues 711 to 788 (DREL…PATH), 884 to 923 (DSVQ…PQPQ), and 944 to 1199 (TYSI…LLQP). T744 is modified (phosphothreonine). The segment at 773 to 1186 (HFSPGPFPSS…SSSPESQHGG (414 aa)) is his. Residues 774-785 (FSPGPFPSSTGP) are compositionally biased toward low complexity. The span at 884–894 (DSVQAPISSHT) shows a compositional bias: polar residues. The segment covering 897–923 (RPNPTPALPQPCFPVPQPVPQSVPQPQ) has biased composition (pro residues). R974 is modified (omega-N-methylarginine). 21 tandem repeats follow at residues 977-978 (PQ), 979-980 (AQ), 981-982 (AQ), 983-984 (PQ), 985-986 (PQ), 987-988 (PQ), 989-990 (PQ), 991-992 (PQ), 993-994 (PQ), 995-996 (PQ), 997-998 (PQ), 999-1000 (PQ), 1001-1002 (PQ), 1003-1004 (PQ), 1005-1006 (SQ), 1007-1008 (SQ), 1009-1010 (PQ), 1011-1012 (PQ), 1013-1014 (PQ), 1015-1016 (PQ), and 1017-1018 (PQ). The tract at residues 977–1018 (PQAQAQPQPQPQPQPQPQPQPQPQPQPQSQSQPQPQPQPQPQ) is 21 X 2 AA approximate tandem repeats of P-Q. Pro residues predominate over residues 984 to 1002 (QPQPQPQPQPQPQPQPQPQ). Pro residues-rich tracts occupy residues 1093–1102 (FPSPGPPHPH) and 1127–1165 (GPPP…PPPC). Phosphoserine occurs at positions 1178 and 1179. T1187 bears the Phosphothreonine mark. Positions 1248–1508 (DAIWRELQEA…KFCHEALVRH (261 aa)) constitute a Tyrosine-protein phosphatase domain. C1448 functions as the Phosphocysteine intermediate in the catalytic mechanism. Positions 1574–1638 (ASLPGLVEPP…PSSSLELLAS (65 aa)) are disordered. The segment covering 1598–1612 (SSSPPPLSSPLPEAP) has biased composition (pro residues). Over residues 1620–1638 (VPEAPSLGPPSSSLELLAS) the composition is skewed to low complexity. The residue at position 1671 (R1671) is an Omega-N-methylarginine.

The protein belongs to the protein-tyrosine phosphatase family. Non-receptor class subfamily. In terms of assembly, interacts with GRAP2 and GRB2. Interacts with UBAP1 and CHMP4B.

It is found in the nucleus. The protein localises to the cytoplasm. The protein resides in the cytoplasmic vesicle. It localises to the endosome. Its subcellular location is the cytoskeleton. It is found in the cilium basal body. The catalysed reaction is O-phospho-L-tyrosyl-[protein] + H2O = L-tyrosyl-[protein] + phosphate. Its function is as follows. Plays a role in sorting of endocytic ubiquitinated cargos into multivesicular bodies (MVBs) via its interaction with the ESCRT-I complex (endosomal sorting complex required for transport I), and possibly also other ESCRT complexes. May act as a negative regulator of Ras-mediated mitogenic activity. Plays a role in ciliogenesis. The chain is Tyrosine-protein phosphatase non-receptor type 23 (Ptpn23) from Mus musculus (Mouse).